A 379-amino-acid chain; its full sequence is Pre-mRNA-processing protein 45 (379 aa).

Positions 1-10 are enriched in pro residues; it reads MFSNRLPPPK. Disordered stretches follow at residues 1 to 22 and 353 to 379; these read MFSN…ALSS and SEGA…NYGA. The span at 368-379 shows a compositional bias: basic and acidic residues; that stretch reads AESDDKSDNYGA.

It belongs to the SNW family. In terms of assembly, belongs to the CWC complex (or CEF1-associated complex), a spliceosome sub-complex reminiscent of a late-stage spliceosome composed of the U2, U5 and U6 snRNAs and at least BUD13, BUD31, BRR2, CDC40, CEF1, CLF1, CUS1, CWC2, CWC15, CWC21, CWC22, CWC23, CWC24, CWC25, CWC27, ECM2, HSH155, IST3, ISY1, LEA1, MSL1, NTC20, PRP8, PRP9, PRP11, PRP19, PRP21, PRP22, PRP45, PRP46, SLU7, SMB1, SMD1, SMD2, SMD3, SMX2, SMX3, SNT309, SNU114, SPP2, SYF1, SYF2, RSE1 and YJU2. Interacts with CLF1, PRP22 and PRP46. Interacts with SPP382.

Its subcellular location is the nucleus. Functionally, involved in pre-mRNA splicing. Associated with the spliceosome throughout the splicing reactions, until after the second catalytic step. The chain is Pre-mRNA-processing protein 45 (PRP45) from Saccharomyces cerevisiae (strain ATCC 204508 / S288c) (Baker's yeast).